A 272-amino-acid polypeptide reads, in one-letter code: Regulatory protein RecX (272 aa).

This sequence belongs to the RecX family.

Its subcellular location is the cytoplasm. Its function is as follows. Modulates RecA activity. The sequence is that of Regulatory protein RecX from Oceanobacillus iheyensis (strain DSM 14371 / CIP 107618 / JCM 11309 / KCTC 3954 / HTE831).